A 570-amino-acid polypeptide reads, in one-letter code: Methionine--tRNA ligase (570 aa).

Residues 11 to 21 (PYVQTVPHLGN) carry the 'HIGH' region motif. Residues Cys-143, Cys-146, Cys-156, and Cys-159 each contribute to the Zn(2+) site. The 'KMSKS' region signature appears at 333–337 (KFSKS). Lys-336 contacts ATP.

This sequence belongs to the class-I aminoacyl-tRNA synthetase family. MetG type 1 subfamily. Zn(2+) serves as cofactor.

It is found in the cytoplasm. The enzyme catalyses tRNA(Met) + L-methionine + ATP = L-methionyl-tRNA(Met) + AMP + diphosphate. Is required not only for elongation of protein synthesis but also for the initiation of all mRNA translation through initiator tRNA(fMet) aminoacylation. The chain is Methionine--tRNA ligase from Pyrobaculum aerophilum (strain ATCC 51768 / DSM 7523 / JCM 9630 / CIP 104966 / NBRC 100827 / IM2).